Here is a 175-residue protein sequence, read N- to C-terminus: MDIAIHHPWIRRPFFPFHSPSRLFDQFFGEHLLESDLFSTATSLSPFYLRPPSFLRAPSWIDTGLSEMRMEKDRFSVNLDVKHFSPEELKVKVLGDVIEVHGKHEERQDEHGFISREFHRKYRIPADVDPLTITSSLSSDGVLTVNGPRKQASGPERTIPITREEKPAVTAAPKK.

Methionine 1 carries the post-translational modification N-acetylmethionine. Serine 19, serine 45, and serine 59 each carry phosphoserine. Residues 56–164 (RAPSWIDTGL…PERTIPITRE (109 aa)) form the sHSP domain. Histidine 83 is a binding site for Zn(2+). Position 92 is an N6-acetyllysine (lysine 92). Zn(2+) is bound by residues histidine 104, glutamate 106, histidine 111, and histidine 119. Residues 142–175 (VLTVNGPRKQASGPERTIPITREEKPAVTAAPKK) form a disordered region. Lysine 166 bears the N6-acetyllysine mark. O-linked (GlcNAc) threonine glycosylation occurs at threonine 170.

This sequence belongs to the small heat shock protein (HSP20) family. As to quaternary structure, heteromer composed of three CRYAA and one CRYAB subunits. Aggregates with homologous proteins, including the small heat shock protein HSPB1, to form large heteromeric complexes. Inter-subunit bridging via zinc ions enhances stability, which is crucial as there is no protein turn over in the lens. Interacts with HSPBAP1. Interacts with TTN/titin. Interacts with TMEM109; in the cellular response to DNA damage. Interacts with DES; binds rapidly during early stages of DES filament assembly and a reduced binding seen in the later stages. Interacts with TMED10; the interaction mediates the translocation from the cytoplasm into the ERGIC (endoplasmic reticulum-Golgi intermediate compartment) and thereby secretion. Interacts with ATP6V1A and with MTOR, forming a ternary complex. In terms of tissue distribution, lens as well as other tissues.

Its subcellular location is the cytoplasm. The protein resides in the nucleus. The protein localises to the secreted. It localises to the lysosome. In terms of biological role, may contribute to the transparency and refractive index of the lens. Has chaperone-like activity, preventing aggregation of various proteins under a wide range of stress conditions. In lens epithelial cells, stabilizes the ATP6V1A protein, preventing its degradation by the proteasome. This Rattus norvegicus (Rat) protein is Alpha-crystallin B chain.